We begin with the raw amino-acid sequence, 175 residues long: Sec-independent protein translocase protein TatB (175 aa).

A helical transmembrane segment spans residues 1 to 21 (MLDLGLSKMALIGVVALVVLG). Low complexity predominate over residues 94 to 115 (SAVSPGGSAAADAPDGPSAASG). Disordered stretches follow at residues 94-118 (SAVSPGGSAAADAPDGPSAASGEPS) and 153-175 (VQSGAARVARHRPASLRRPARFL). The span at 160–175 (VARHRPASLRRPARFL) shows a compositional bias: basic residues.

This sequence belongs to the TatB family. As to quaternary structure, the Tat system comprises two distinct complexes: a TatABC complex, containing multiple copies of TatA, TatB and TatC subunits, and a separate TatA complex, containing only TatA subunits. Substrates initially bind to the TatABC complex, which probably triggers association of the separate TatA complex to form the active translocon.

The protein localises to the cell inner membrane. Functionally, part of the twin-arginine translocation (Tat) system that transports large folded proteins containing a characteristic twin-arginine motif in their signal peptide across membranes. Together with TatC, TatB is part of a receptor directly interacting with Tat signal peptides. TatB may form an oligomeric binding site that transiently accommodates folded Tat precursor proteins before their translocation. The chain is Sec-independent protein translocase protein TatB from Burkholderia pseudomallei (strain 1106a).